A 243-amino-acid chain; its full sequence is Probable transcriptional regulatory protein BB_0025 (243 aa).

This sequence belongs to the TACO1 family.

It is found in the cytoplasm. This is Probable transcriptional regulatory protein BB_0025 from Borreliella burgdorferi (strain ATCC 35210 / DSM 4680 / CIP 102532 / B31) (Borrelia burgdorferi).